The chain runs to 184 residues: Photosystem I assembly protein Ycf4 (184 aa).

The next 2 membrane-spanning stretches (helical) occupy residues 24–44 (WAFILFLGSLGFLLVGTSSYI) and 57–77 (IIFFPQGIVMSFYGIAGLFIS).

Belongs to the Ycf4 family.

The protein localises to the plastid. It localises to the chloroplast thylakoid membrane. In terms of biological role, seems to be required for the assembly of the photosystem I complex. The protein is Photosystem I assembly protein Ycf4 of Buxus microphylla (Littleleaf boxwood).